The sequence spans 403 residues: ATP phosphoribosyltransferase regulatory subunit (403 aa).

It belongs to the class-II aminoacyl-tRNA synthetase family. HisZ subfamily. In terms of assembly, heteromultimer composed of HisG and HisZ subunits.

Its subcellular location is the cytoplasm. It participates in amino-acid biosynthesis; L-histidine biosynthesis; L-histidine from 5-phospho-alpha-D-ribose 1-diphosphate: step 1/9. In terms of biological role, required for the first step of histidine biosynthesis. May allow the feedback regulation of ATP phosphoribosyltransferase activity by histidine. In Nostoc punctiforme (strain ATCC 29133 / PCC 73102), this protein is ATP phosphoribosyltransferase regulatory subunit.